Reading from the N-terminus, the 211-residue chain is Ethylene-responsive transcription factor LEP (211 aa).

2 disordered regions span residues 1 to 21 (MNTT…TRFL) and 74 to 110 (NFVY…NDPV). Residues 19 to 76 (RFLGVRRRPWGRYAAEIRDPTTKERHWLGTFDTAEEAALAYDRAARSMRGTRARTNFV) constitute a DNA-binding region (AP2/ERF). Residues 81–92 (PPSSSVTSIVSP) are compositionally biased toward low complexity. Residues 93-107 (DDPPPPPPPPAPPSN) show a composition bias toward pro residues.

The protein belongs to the AP2/ERF transcription factor family. ERF subfamily. In terms of tissue distribution, expressed in germinating seeds. Present in young shoots, at low levels, especially in leaf primordia and developing leaf blades. Also detected in vascular tissue, mostly in xylem, of young leaves, petioles and hypocotyls.

Its subcellular location is the nucleus. In terms of biological role, cell division-promoting factor involved in leaf blade differentiation, inflorescence branching, as well as in carpel and silique shape. Promotes the number of xylem cells. Positively regulates the gibberellin signaling pathway leading to germination, hypocotyl elongation, and leaf expansion. Probably acts as a transcriptional activator. Binds to the GCC-box pathogenesis-related promoter element. May be involved in the regulation of gene expression by stress factors and by components of stress signal transduction pathways. The chain is Ethylene-responsive transcription factor LEP (LEP) from Arabidopsis thaliana (Mouse-ear cress).